A 252-amino-acid polypeptide reads, in one-letter code: Chlorophyll a-b binding protein P4, chloroplastic (252 aa).

Residue Trp-56 coordinates chlorophyll b. 2 residues coordinate chlorophyll a: Phe-76 and Glu-95. Chlorophyll b is bound at residue Arg-100. Transmembrane regions (helical) follow at residues 101–121 (WAML…IGII) and 134–154 (YFAS…YVEI). Residues Ser-137, Val-143, Glu-153, and Arg-156 each coordinate chlorophyll b. Chlorophyll a-binding residues include Lys-203, Glu-204, Asn-207, Arg-209, Gln-221, and His-236.

Belongs to the light-harvesting chlorophyll a/b-binding (LHC) protein family. The LHC complex consists of chlorophyll a-b binding proteins. Binds at least 14 chlorophylls (8 Chl-a and 6 Chl-b) and carotenoids such as lutein and neoxanthin. serves as cofactor. In terms of processing, photoregulated by reversible phosphorylation of its threonine residues.

It is found in the plastid. Its subcellular location is the chloroplast thylakoid membrane. Its function is as follows. The light-harvesting complex (LHC) functions as a light receptor, it captures and delivers excitation energy to photosystems with which it is closely associated. May channel protons produced in the catalytic Mn center of water oxidation into the thylakoid lumen. This chain is Chlorophyll a-b binding protein P4, chloroplastic, found in Pisum sativum (Garden pea).